A 573-amino-acid polypeptide reads, in one-letter code: DNA ligase (573 aa).

Position 250 (glutamate 250) interacts with ATP. Lysine 252 serves as the catalytic N6-AMP-lysine intermediate. Residues arginine 257, arginine 272, glutamate 301, phenylalanine 342, arginine 432, and lysine 438 each contribute to the ATP site.

The protein belongs to the ATP-dependent DNA ligase family. It depends on Mg(2+) as a cofactor.

The enzyme catalyses ATP + (deoxyribonucleotide)n-3'-hydroxyl + 5'-phospho-(deoxyribonucleotide)m = (deoxyribonucleotide)n+m + AMP + diphosphate.. In terms of biological role, DNA ligase that seals nicks in double-stranded DNA during DNA replication, DNA recombination and DNA repair. The polypeptide is DNA ligase (Methanococcus maripaludis (strain DSM 14266 / JCM 13030 / NBRC 101832 / S2 / LL)).